The chain runs to 429 residues: Alanine aminotransferase (429 aa).

2 residues coordinate L-alanine: G65 and N204. K265 carries the post-translational modification N6-(pyridoxal phosphate)lysine. An L-alanine-binding site is contributed by R403.

Belongs to the class-I pyridoxal-phosphate-dependent aminotransferase family. In terms of assembly, homodimer. Pyridoxal 5'-phosphate serves as cofactor.

It is found in the cytoplasm. It catalyses the reaction L-alanine + 2-oxoglutarate = pyruvate + L-glutamate. This is Alanine aminotransferase (aspC) from Mycobacterium bovis (strain ATCC BAA-935 / AF2122/97).